The chain runs to 351 residues: Circumsporozoite protein (351 aa).

Residues 1–22 (MKNFILLAVSSILLVDLLPTHF) form the signal peptide. Residues 50–266 (AQVRQSASRG…GQNNQGANVP (217 aa)) form a disordered region. Positions 61 to 96 (GLGEKPKEGADKEKKKEKEKEKEEEPKKPNENKLKQ) are enriched in basic and acidic residues. The tract at residues 80 to 88 (KEKEEEPKK) is required for the binding to heparan sulfate proteoglycans (HSPGs) on the surface of host hepatocytes. The segment at 93–97 (KLKQP) is region I; contains the proteolytic cleavage site. Positions 97–219 (PEQPAAGAGG…AGARGEQPAA (123 aa)) are enriched in low complexity. A run of 14 repeats spans residues 101–109 (AAGAGGEQP), 110–118 (AAGAGGEQP), 119–127 (AAGAGGEQP), 128–136 (AAGARGEQP), 137–145 (AAGAGGEQP), 146–154 (AAGAGGEQP), 155–163 (AAGAGGEQP), 164–172 (AAGAGGEQP), 173–181 (AAGAGGEQP), 182–190 (AAGARGEQP), 191–199 (AAGAGGEQP), 200–208 (AAGAGGEQP), 209–217 (AAGARGEQP), and 218–226 (AAGAGGEQP). Residues 101 to 226 (AAGAGGEQPA…PAAGAGGEQP (126 aa)) form a 14 X 9 AA tandem repeats of A-A-G-A-[GR]-G-E-Q-P region. Residues 244–256 (GARGGNAGAGKGQ) show a composition bias toward gly residues. Residues 277–329 (KIRSSVTTEWTPCSVTCGNGVRIRRKGHAGNKKAEDLTMDDLEVEACVMDKCA) enclose the TSP type-1 domain. Disulfide bonds link Cys289–Cys323 and Cys293–Cys328. The O-linked (Fuc) threonine glycan is linked to Thr292. Cys328 carries the GPI-anchor amidated cysteine lipid modification. A propeptide spans 329–351 (AGIFNVVSNSLGLVILLVLALFN) (removed in mature form).

Belongs to the plasmodium circumsporozoite protein family. Post-translationally, during host cell invasion, proteolytically cleaved at the cell membrane in the region I by a papain-like cysteine protease of parasite origin. Cleavage is triggered by the sporozoite contact with highly sulfated heparan sulfate proteoglycans (HSPGs) present on the host hepatocyte cell surface. Cleavage exposes the TSP type-1 (TSR) domain and is required for productive invasion of host hepatocytes but not for adhesion to the host cell membrane. Cleavage is dispensable for sporozoite development in the oocyst, motility and for traversal of host and vector cells. O-glycosylated; maybe by POFUT2.

Its subcellular location is the cell membrane. It localises to the cytoplasm. In terms of biological role, essential sporozoite protein. In the mosquito vector, required for sporozoite development in the oocyst, migration through the vector hemolymph and entry into the vector salivary glands. In the vertebrate host, required for sporozoite migration through the host dermis and infection of host hepatocytes. Binds to highly sulfated heparan sulfate proteoglycans (HSPGs) on the surface of host hepatocytes. In the vertebrate host, binds to highly sulfated heparan sulfate proteoglycans (HSPGs) on the surface of host hepatocytes and is required for sporozoite invasion of the host hepatocytes. The chain is Circumsporozoite protein from Plasmodium knowlesi (strain nuri).